Reading from the N-terminus, the 316-residue chain is Ribosomal RNA large subunit methyltransferase F (316 aa).

This sequence belongs to the methyltransferase superfamily. METTL16/RlmF family.

It localises to the cytoplasm. It catalyses the reaction adenosine(1618) in 23S rRNA + S-adenosyl-L-methionine = N(6)-methyladenosine(1618) in 23S rRNA + S-adenosyl-L-homocysteine + H(+). Specifically methylates the adenine in position 1618 of 23S rRNA. This Pseudomonas putida (strain W619) protein is Ribosomal RNA large subunit methyltransferase F.